Here is a 331-residue protein sequence, read N- to C-terminus: UPF0194 membrane protein YbhG (331 aa).

Residues 1–19 (MKKPVVIGLAIAAIVAVIA) form the signal peptide. Residues 107–208 (EEIAQAAAAV…LDLQDTTLIA (102 aa)) are a coiled coil.

The protein belongs to the UPF0194 family.

Its subcellular location is the periplasm. In Salmonella gallinarum (strain 287/91 / NCTC 13346), this protein is UPF0194 membrane protein YbhG.